The sequence spans 961 residues: MADSCAENAAKGTENERPKEVEASADTVPQVEEGVEEYLKRKNMVLLDYEKQMFLDLVEADGLLVCAKGLSYDRVVISILKAYSDSGNLVLVINSSDWEEQYYKSKIEPKYVHEVASTATERERVYLEGGLQFISTRILVVDLLKQRIPIELISGIIVLRAHTIIESCQEAFALRLFRQKNKTGFVKAFSSSPEAFTIGYSHVERTMRNLFVKHLYIWPRFHESVRTVLQPWKIQSIEMHVPISQNITSIQSHILEIMNFLVQEIKRINRTVDMEAVTVENCVTKSFHKILQAQLDCIWHQLNSQTKLIVADLKILRSLMISTMYHDAVSAYAFMKRYRSTEYALSNSGWTLLDAAEQIFKLSRQRVFNGQQEFEPEPCPKWQTLTDLLTKEIPGDMRRSRRSEQQPKVLILCQDARTCHQLKQYLTQGGPRFLLQQALQHEVPVGKLSDNYAKESQTRSAPPKNVSSNKELRREEVSGSQPPLAGMDELAQLLSESETEGQHFEESYMLTMTQPVEVGPAAIDIKPDPDVSIFETIPELEQFDVTAALASVPHQPYICLQTFKTEREGSMALEHMLEQLQPHYVVMYNMNVTAIRQLEVFEARRRLPPADRMKVYFLIHARTVEEQAYLTSLRREKAAFEFIIDTKSKMVIPKYQDGKTDEAFLLLKTYDDEPTDENAKSRQAGGQAPQATKETPKVIVDMREFRSDLPCLIHKRGLEVLPLTITIGDYILTPDICVERKSISDLIGSLNSGRLYNQCVQMQRHYAKPILLIEFDQNKPFHLQGKFMLSQQTSMANADIVQKLQLLTLHFPKLRLIWSPSPYATAQLFEELKLGKPEPDPQTAAALGSDEPTAGEQLHFNSGIYDFLLRLPGVHTRNIHGLLRKGGSLRQLLLRSQKELEELLQSQESAKLLYDILHVAHLPEKDEVTGSTALLAASKQFGAGSHNRFRMAAAASRRGRR.

3 disordered regions span residues 1–27 (MADS…SADT), 451–485 (NYAK…PPLA), and 674–693 (PTDE…QATK). The segment covering 13–22 (TENERPKEVE) has biased composition (basic and acidic residues). Residues 458–469 (TRSAPPKNVSSN) show a composition bias toward polar residues. An ERCC4 domain is found at 697 to 777 (KVIVDMREFR…KPILLIEFDQ (81 aa)).

Belongs to the XPF family. Heterodimer. Interacts with hdm.

The protein localises to the nucleus. Implicated in recombination events during meiosis, mostly in meiotic exchange. May directly resolve Holliday junctions within recombination intermediates leading to DNA exchange. Also required for the repair of mismatches within meiotic heteroduplex DNA and for nucleotide excision repair. This Drosophila melanogaster (Fruit fly) protein is DNA repair endonuclease XPF (mei-9).